A 24-amino-acid polypeptide reads, in one-letter code: FLPILASLAAKLGPKLFCLVTKKC.

A disulfide bond links Cys18 and Cys24.

As to expression, expressed by the skin glands.

The protein localises to the secreted. Functionally, antibacterial activity against Gram-positive bacterium S.aureus and Gram-negative bacterium E.coli. Has moderate antifungal activity against C.albicans and strong hemolytic activity. This is Brevinin-1BYb from Rana boylii (Foothill yellow-legged frog).